A 506-amino-acid chain; its full sequence is Zinc finger protein MAGPIE (506 aa).

The interval M1–E53 is disordered. Over residues S9–T21 the composition is skewed to low complexity. Positions D22 to E33 are enriched in basic and acidic residues. S60 carries the post-translational modification Phosphoserine. C2H2-type zinc fingers lie at residues F70–H92 and Y111–H141. Residues I133–K140 carry the Nuclear localization signal motif. A C2H2-type 2; degenerate zinc finger spans residues W146–G169. Residues C148, C151, H164, C168, C175, C177, H190, and C194 each contribute to the Zn(2+) site. The CCHC-type 2; atypical zinc finger occupies Y173–A196. Residues R183–D195 are SHR-binding.

Interacts with SHR, SCR and JKD, but not with itself. Interacts with SIEL. Binds to RGA and SCL3 competitively in the nucleus. In terms of tissue distribution, expressed in the ground tissue and stele cells of embryos and 2-days post-germination roots but not in the quiescent center. Detected only in cells that perform asymmetric cell divisions. In roots, present in cortex, endodermis, and pericycle layer.

The protein resides in the nucleus. Its function is as follows. Transcription factor that regulates tissue boundaries and asymmetric cell division. Contributes to the sequestration of 'SHORT-ROOT' to the nucleus. Interacts with the SCR and MGP promoters. Does not show transcription activity by itself, but regulates the transcription of downstream genes through interaction with other transcription factors. Binds DNA via its zinc fingers. Recognizes and binds to SCL3 promoter sequence 5'-AGACAA-3' to promote its expression when in complex with RGA. Positively involved in gibberellic acid (GA) signaling. In Arabidopsis thaliana (Mouse-ear cress), this protein is Zinc finger protein MAGPIE.